Reading from the N-terminus, the 380-residue chain is S-adenosylmethionine synthase (380 aa).

Residue His15 participates in ATP binding. A Mg(2+)-binding site is contributed by Asp17. Residue Glu43 participates in K(+) binding. Residues Glu56 and Gln99 each coordinate L-methionine. A flexible loop region spans residues 99 to 109 (QSPDIAMGIDN). Residues 164 to 166 (DAK), 230 to 231 (RF), Asp239, 245 to 246 (RK), and Lys266 each bind ATP. Residue Asp239 coordinates L-methionine. Residue Lys270 participates in L-methionine binding.

It belongs to the AdoMet synthase family. In terms of assembly, homotetramer; dimer of dimers. Requires Mg(2+) as cofactor. It depends on K(+) as a cofactor.

It localises to the cytoplasm. The enzyme catalyses L-methionine + ATP + H2O = S-adenosyl-L-methionine + phosphate + diphosphate. It functions in the pathway amino-acid biosynthesis; S-adenosyl-L-methionine biosynthesis; S-adenosyl-L-methionine from L-methionine: step 1/1. In terms of biological role, catalyzes the formation of S-adenosylmethionine (AdoMet) from methionine and ATP. The overall synthetic reaction is composed of two sequential steps, AdoMet formation and the subsequent tripolyphosphate hydrolysis which occurs prior to release of AdoMet from the enzyme. The protein is S-adenosylmethionine synthase of Rickettsia prowazekii (strain Madrid E).